The chain runs to 232 residues: Alpha N-terminal protein methyltransferase 1 (232 aa).

Residues Gly71, Arg76, 123-124 (MQ), and Gln139 each bind S-adenosyl-L-methionine.

It belongs to the methyltransferase superfamily. NTM1 family.

The protein localises to the cytoplasm. It catalyses the reaction N-terminal L-alanyl-L-prolyl-L-lysyl-[protein] + 3 S-adenosyl-L-methionine = N-terminal N,N,N-trimethyl-L-alanyl-L-prolyl-L-lysyl-[protein] + 3 S-adenosyl-L-homocysteine + 3 H(+). The catalysed reaction is N-terminal L-seryl-L-prolyl-L-lysyl-[protein] + 3 S-adenosyl-L-methionine = N-terminal N,N,N-trimethyl-L-seryl-L-prolyl-L-lysyl-[protein] + 3 S-adenosyl-L-homocysteine + 3 H(+). It carries out the reaction N-terminal L-prolyl-L-prolyl-L-lysyl-[protein] + 2 S-adenosyl-L-methionine = N-terminal N,N-dimethyl-L-prolyl-L-prolyl-L-lysyl-[protein] + 2 S-adenosyl-L-homocysteine + 2 H(+). Functionally, alpha-N-methyltransferase that methylates the N-terminus of target proteins containing the N-terminal motif [Ala/Pro/Ser]-Pro-Lys when the initiator Met is cleaved. Specifically catalyzes mono-, di- or tri-methylation of exposed alpha-amino group of Ala or Ser residue in the [Ala/Ser]-Pro-Lys motif and mono- or di-methylation of Pro in the Pro-Pro-Lys motif. Responsible for the N-terminal methylation of the ribosomal proteins RPL12A, RPL12B, RPS25A and RPS25B. This is Alpha N-terminal protein methyltransferase 1 (TAE1) from Saccharomyces cerevisiae (strain ATCC 204508 / S288c) (Baker's yeast).